The following is a 261-amino-acid chain: Glucosamine-6-phosphate deaminase (261 aa).

The active-site Proton acceptor; for enolization step is aspartate 67. Residue aspartate 136 is the For ring-opening step of the active site. The active-site Proton acceptor; for ring-opening step is the histidine 138. The For ring-opening step role is filled by glutamate 143.

It belongs to the glucosamine/galactosamine-6-phosphate isomerase family. NagB subfamily.

The catalysed reaction is alpha-D-glucosamine 6-phosphate + H2O = beta-D-fructose 6-phosphate + NH4(+). It functions in the pathway amino-sugar metabolism; N-acetylneuraminate degradation; D-fructose 6-phosphate from N-acetylneuraminate: step 5/5. Catalyzes the reversible isomerization-deamination of glucosamine 6-phosphate (GlcN6P) to form fructose 6-phosphate (Fru6P) and ammonium ion. This is Glucosamine-6-phosphate deaminase from Mycolicibacterium smegmatis (strain ATCC 700084 / mc(2)155) (Mycobacterium smegmatis).